The following is an 876-amino-acid chain: Leucine--tRNA ligase (876 aa).

Positions 43-53 (PYPSGRIHMGH) match the 'HIGH' region motif. Residues 632–636 (KMSKS) carry the 'KMSKS' region motif. Lys-635 provides a ligand contact to ATP.

The protein belongs to the class-I aminoacyl-tRNA synthetase family.

The protein localises to the cytoplasm. It carries out the reaction tRNA(Leu) + L-leucine + ATP = L-leucyl-tRNA(Leu) + AMP + diphosphate. The sequence is that of Leucine--tRNA ligase from Rhizobium etli (strain CIAT 652).